Here is a 753-residue protein sequence, read N- to C-terminus: Bifunctional terpene synthase FUP1 (753 aa).

The terpene cyclase stretch occupies residues 1-329; that stretch reads MGPLLYRSRH…CSACPRQNAW (329 aa). Mg(2+) is bound at residue D96. The short motif at 96 to 100 is the DDXXD 1 element; the sequence is DDTGE. The short motif at 231 to 239 is the NSE/DTE element; it reads NDYFSWERE. The prenyltransferase stretch occupies residues 330-745; that stretch reads KNDTLSNGQN…MLRLCLAKLS (416 aa). 3 residues coordinate isopentenyl diphosphate: K461, R464, and H493. The Mg(2+) site is built by D500 and D504. The DDXXD 2 motif lies at 500 to 504; it reads DDLED. A dimethylallyl diphosphate-binding site is contributed by R509. Isopentenyl diphosphate is bound at residue R510. Residues K587, T588, Q625, N632, K640, and K650 each coordinate dimethylallyl diphosphate.

The protein in the N-terminal section; belongs to the terpene synthase family. This sequence in the C-terminal section; belongs to the FPP/GGPP synthase family. In terms of assembly, hexamer. Mg(2+) is required as a cofactor.

It catalyses the reaction isopentenyl diphosphate + (2E,6E)-farnesyl diphosphate = (2E,6E,10E)-geranylgeranyl diphosphate + diphosphate. It participates in secondary metabolite biosynthesis; terpenoid biosynthesis. Functionally, bifunctional terpene synthase; part of the gene cluster that mediates the biosynthesis of the mycotoxin fusaproliferin (FUP) that belongs to the class of bicyclic sesterterpenoids. The FUP biosynthetic pathway starts with the enzyme encoded by FUP1 that combines a C-terminal prenyltransferase domain responsible for the synthesis of geranylgeranyl diphosphate with the N-terminal terpene cyclase domain, to yield preterpestacin I. Preterpestacin I is then decorated by oxygenation steps that are catalyzed by two cytochrome P450 monooxygenases. First, FUP2 introduces a hydroxyl group at the C-24 position resulting in the formation of preterpestacin IIa, which can be further oxidized. The second P450 monooxygenase catalyzes the hydroxylation at C-16 and C-17 of preterpestacin IIa, producing preterpestacin III. Subsequently, the FAD-dependent oxidoreductase FUP4 catalyzes the oxidation of the hydroxy group at the C-16 position to a keto group, leading to the formation of (-)-terpestacin, which is the immediate precursor of FUP. The final step in the proposed biosynthetic pathway is the addition of an acetyl group at the C-24 position of terpestacin, which is catalyzed by the acetyltransferase FUP5. In Fusarium proliferatum (strain ET1) (Orchid endophyte fungus), this protein is Bifunctional terpene synthase FUP1.